Reading from the N-terminus, the 203-residue chain is RNA annealing protein YRA2 (203 aa).

An N-acetylmethionine modification is found at Met-1. Disordered regions lie at residues 1-60 and 137-203; these read MDKA…REEP and QPQR…YMKG. Positions 11 to 20 are enriched in polar residues; the sequence is NSHTDSSSNH. The segment covering 47–60 has biased composition (basic and acidic residues); it reads SRSKDRLYREREEP. In terms of domain architecture, RRM spans 64–138; it reads KRIRISKIPL…AKIEVEIYQP (75 aa). Basic residues-rich tracts occupy residues 139–153 and 161–180; these read QRKH…RRKQ and GRPG…KNKG.

This sequence belongs to the YRA1 family. Associates with mRNPs. Interacts with YRA1.

It is found in the nucleus. Its function is as follows. Involved in export of poly(A) mRNAs from the nucleus. Recruited to the coding sequences as well as poly-A sites of active genes. The chain is RNA annealing protein YRA2 (YRA2) from Saccharomyces cerevisiae (strain JAY291) (Baker's yeast).